Here is a 284-residue protein sequence, read N- to C-terminus: Ermin (284 aa).

The interval 1 to 23 (MTDVPATFTQAECNGDKPPENGQ) is disordered. At Ser73 the chain carries Phosphoserine. The disordered stretch occupies residues 110-251 (REGHQWEKIP…PTLGKKSDIS (142 aa)). Composition is skewed to basic and acidic residues over residues 126-140 (EIRR…QPLK) and 171-183 (LHSK…KVWD). Residues 184 to 200 (EEIDDDDDDNCNNDEDE) are compositionally biased toward acidic residues. Basic and acidic residues predominate over residues 201–220 (VRVIEFKKKHEEVSQFKEEG). Phosphoserine is present on residues Ser214, Ser226, Ser230, and Ser233. The span at 225–235 (DSPLSSASSQA) shows a compositional bias: low complexity. Thr237 carries the phosphothreonine modification. The binds actin stretch occupies residues 265–284 (KIRKGNTKQRIDEFESMMHL).

In terms of assembly, binds actin. In terms of tissue distribution, highly expressed in adult and fetal brain. Expressed at intermediate levels in the lung and liver.

It localises to the cytoplasm. The protein localises to the cytoskeleton. Functionally, plays a role in cytoskeletal rearrangements during the late wrapping and/or compaction phases of myelinogenesis as well as in maintenance and stability of myelin sheath in the adult. May play an important role in late-stage oligodendroglia maturation, myelin/Ranvier node formation during CNS development, and in the maintenance and plasticity of related structures in the mature CNS. This chain is Ermin (ERMN), found in Homo sapiens (Human).